The chain runs to 345 residues: N-acetyl-gamma-glutamyl-phosphate reductase (345 aa).

C149 is a catalytic residue.

Belongs to the NAGSA dehydrogenase family. Type 1 subfamily.

Its subcellular location is the cytoplasm. The catalysed reaction is N-acetyl-L-glutamate 5-semialdehyde + phosphate + NADP(+) = N-acetyl-L-glutamyl 5-phosphate + NADPH + H(+). It functions in the pathway amino-acid biosynthesis; L-arginine biosynthesis; N(2)-acetyl-L-ornithine from L-glutamate: step 3/4. Catalyzes the NADPH-dependent reduction of N-acetyl-5-glutamyl phosphate to yield N-acetyl-L-glutamate 5-semialdehyde. This is N-acetyl-gamma-glutamyl-phosphate reductase from Janthinobacterium sp. (strain Marseille) (Minibacterium massiliensis).